A 68-amino-acid polypeptide reads, in one-letter code: Large ribosomal subunit protein bL32 (68 aa).

It belongs to the bacterial ribosomal protein bL32 family.

In Orientia tsutsugamushi (strain Ikeda) (Rickettsia tsutsugamushi), this protein is Large ribosomal subunit protein bL32.